Here is a 682-residue protein sequence, read N- to C-terminus: Methionine--tRNA ligase (682 aa).

The 'HIGH' region signature appears at 14 to 24 (PYANGSIHLGH). Zn(2+) is bound by residues cysteine 145, cysteine 148, cysteine 158, and cysteine 161. Positions 331 to 335 (KMSKS) match the 'KMSKS' region motif. ATP is bound at residue lysine 334. The region spanning 580–682 (AFAAVDLRVA…SGAKPGQRIK (103 aa)) is the tRNA-binding domain.

The protein belongs to the class-I aminoacyl-tRNA synthetase family. MetG type 1 subfamily. As to quaternary structure, homodimer. Requires Zn(2+) as cofactor.

It localises to the cytoplasm. It carries out the reaction tRNA(Met) + L-methionine + ATP = L-methionyl-tRNA(Met) + AMP + diphosphate. Its function is as follows. Is required not only for elongation of protein synthesis but also for the initiation of all mRNA translation through initiator tRNA(fMet) aminoacylation. The sequence is that of Methionine--tRNA ligase from Pseudomonas savastanoi pv. phaseolicola (strain 1448A / Race 6) (Pseudomonas syringae pv. phaseolicola (strain 1448A / Race 6)).